The following is a 163-amino-acid chain: Secreted RxLR effector protein 135 (163 aa).

The N-terminal stretch at M1 to G20 is a signal peptide. The short motif at R33–R45 is the RxLR-dEER element. Positions K94–G127 are disordered.

This sequence belongs to the RxLR effector family.

The protein localises to the secreted. It is found in the host nucleus. It localises to the host cytoplasm. In terms of biological role, secreted effector that completely suppresses the host cell death induced by cell death-inducing proteins. This chain is Secreted RxLR effector protein 135, found in Plasmopara viticola (Downy mildew of grapevine).